The following is a 419-amino-acid chain: UDP-N-acetylglucosamine 1-carboxyvinyltransferase (419 aa).

Phosphoenolpyruvate is bound at residue 22 to 23 (KN). Residue arginine 93 coordinates UDP-N-acetyl-alpha-D-glucosamine. The Proton donor role is filled by cysteine 117. A 2-(S-cysteinyl)pyruvic acid O-phosphothioketal modification is found at cysteine 117. UDP-N-acetyl-alpha-D-glucosamine-binding positions include 122-126 (RPVDQ), aspartate 305, and isoleucine 327.

Belongs to the EPSP synthase family. MurA subfamily.

The protein resides in the cytoplasm. The enzyme catalyses phosphoenolpyruvate + UDP-N-acetyl-alpha-D-glucosamine = UDP-N-acetyl-3-O-(1-carboxyvinyl)-alpha-D-glucosamine + phosphate. The protein operates within cell wall biogenesis; peptidoglycan biosynthesis. Cell wall formation. Adds enolpyruvyl to UDP-N-acetylglucosamine. This is UDP-N-acetylglucosamine 1-carboxyvinyltransferase from Dichelobacter nodosus (strain VCS1703A).